A 166-amino-acid chain; its full sequence is Phosphopantetheine adenylyltransferase (166 aa).

Substrate is bound at residue S11. ATP is bound by residues 11–12 and H19; that span reads SF. Residues K43, A76, and R90 each coordinate substrate. ATP-binding positions include 91 to 93, E101, and 126 to 132; these read GLR and LQPVSSS.

This sequence belongs to the bacterial CoaD family. As to quaternary structure, homohexamer. Mg(2+) is required as a cofactor.

The protein localises to the cytoplasm. The enzyme catalyses (R)-4'-phosphopantetheine + ATP + H(+) = 3'-dephospho-CoA + diphosphate. The protein operates within cofactor biosynthesis; coenzyme A biosynthesis; CoA from (R)-pantothenate: step 4/5. Functionally, reversibly transfers an adenylyl group from ATP to 4'-phosphopantetheine, yielding dephospho-CoA (dPCoA) and pyrophosphate. The chain is Phosphopantetheine adenylyltransferase from Streptococcus equi subsp. equi (strain 4047).